We begin with the raw amino-acid sequence, 142 residues long: Small ribosomal subunit protein bS6 (142 aa).

The tract at residues 103 to 142 (KAAESREQRAPRGEDRPARVVADDVDDSDDDTDDEDSNDE) is disordered. A compositionally biased stretch (basic and acidic residues) spans 105–124 (AESREQRAPRGEDRPARVVA). A compositionally biased stretch (acidic residues) spans 125–142 (DDVDDSDDDTDDEDSNDE).

It belongs to the bacterial ribosomal protein bS6 family.

Its function is as follows. Binds together with bS18 to 16S ribosomal RNA. The chain is Small ribosomal subunit protein bS6 from Hahella chejuensis (strain KCTC 2396).